We begin with the raw amino-acid sequence, 457 residues long: Siroheme synthase 2 (457 aa).

Residues 1 to 204 are precorrin-2 dehydrogenase /sirohydrochlorin ferrochelatase; the sequence is MDHLPIFCQL…DDEQAVTRIT (204 aa). NAD(+) contacts are provided by residues 22-23 and 43-44; these read DV and LA. S128 is modified (phosphoserine). The segment at 216 to 457 is uroporphyrinogen-III C-methyltransferase; the sequence is GEVVLVGAGP…RDKLNWFSSK (242 aa). P225 contributes to the S-adenosyl-L-methionine binding site. D248 acts as the Proton acceptor in catalysis. The active-site Proton donor is K270. S-adenosyl-L-methionine is bound by residues 301-303, I306, 331-332, M382, and G411; these read GGD and TA.

The protein in the N-terminal section; belongs to the precorrin-2 dehydrogenase / sirohydrochlorin ferrochelatase family. In the C-terminal section; belongs to the precorrin methyltransferase family.

The enzyme catalyses uroporphyrinogen III + 2 S-adenosyl-L-methionine = precorrin-2 + 2 S-adenosyl-L-homocysteine + H(+). It carries out the reaction precorrin-2 + NAD(+) = sirohydrochlorin + NADH + 2 H(+). It catalyses the reaction siroheme + 2 H(+) = sirohydrochlorin + Fe(2+). The protein operates within cofactor biosynthesis; adenosylcobalamin biosynthesis; precorrin-2 from uroporphyrinogen III: step 1/1. Its pathway is cofactor biosynthesis; adenosylcobalamin biosynthesis; sirohydrochlorin from precorrin-2: step 1/1. It participates in porphyrin-containing compound metabolism; siroheme biosynthesis; precorrin-2 from uroporphyrinogen III: step 1/1. It functions in the pathway porphyrin-containing compound metabolism; siroheme biosynthesis; siroheme from sirohydrochlorin: step 1/1. The protein operates within porphyrin-containing compound metabolism; siroheme biosynthesis; sirohydrochlorin from precorrin-2: step 1/1. Multifunctional enzyme that catalyzes the SAM-dependent methylations of uroporphyrinogen III at position C-2 and C-7 to form precorrin-2 via precorrin-1. Then it catalyzes the NAD-dependent ring dehydrogenation of precorrin-2 to yield sirohydrochlorin. Finally, it catalyzes the ferrochelation of sirohydrochlorin to yield siroheme. The sequence is that of Siroheme synthase 2 from Cronobacter sakazakii (strain ATCC BAA-894) (Enterobacter sakazakii).